The primary structure comprises 157 residues: Iron-sulfur cluster repair protein DnrN (157 aa).

This sequence belongs to the RIC family.

It is found in the cytoplasm. Its function is as follows. Di-iron-containing protein involved in the repair of iron-sulfur clusters damaged by oxidative and nitrosative stress conditions. Required to repair damage caused by nitric oxide to FNR and NsrR transcription factors. The chain is Iron-sulfur cluster repair protein DnrN (dnrN) from Neisseria gonorrhoeae.